The sequence spans 819 residues: Leucine--tRNA ligase (819 aa).

The 'HIGH' region signature appears at 42–53 (PYPSGAKLHIGH). The 'KMSKS' region motif lies at 578 to 582 (RMSKS). Lys581 contacts ATP.

The protein belongs to the class-I aminoacyl-tRNA synthetase family.

It is found in the cytoplasm. It catalyses the reaction tRNA(Leu) + L-leucine + ATP = L-leucyl-tRNA(Leu) + AMP + diphosphate. This is Leucine--tRNA ligase from Caldanaerobacter subterraneus subsp. tengcongensis (strain DSM 15242 / JCM 11007 / NBRC 100824 / MB4) (Thermoanaerobacter tengcongensis).